Reading from the N-terminus, the 397-residue chain is Succinate--CoA ligase [ADP-forming] subunit beta (397 aa).

One can recognise an ATP-grasp domain in the interval 9 to 254 (KALLKSFGAP…TTEEDEKEIE (246 aa)). ATP is bound by residues Lys-46, 53 to 55 (GRG), Glu-109, Ala-112, and Glu-117. Mg(2+) contacts are provided by Asn-209 and Asp-223. Substrate is bound by residues Asn-274 and 331 to 333 (GIM).

The protein belongs to the succinate/malate CoA ligase beta subunit family. As to quaternary structure, heterotetramer of two alpha and two beta subunits. The cofactor is Mg(2+).

It catalyses the reaction succinate + ATP + CoA = succinyl-CoA + ADP + phosphate. It carries out the reaction GTP + succinate + CoA = succinyl-CoA + GDP + phosphate. It participates in carbohydrate metabolism; tricarboxylic acid cycle; succinate from succinyl-CoA (ligase route): step 1/1. Its function is as follows. Succinyl-CoA synthetase functions in the citric acid cycle (TCA), coupling the hydrolysis of succinyl-CoA to the synthesis of either ATP or GTP and thus represents the only step of substrate-level phosphorylation in the TCA. The beta subunit provides nucleotide specificity of the enzyme and binds the substrate succinate, while the binding sites for coenzyme A and phosphate are found in the alpha subunit. The sequence is that of Succinate--CoA ligase [ADP-forming] subunit beta from Mesorhizobium japonicum (strain LMG 29417 / CECT 9101 / MAFF 303099) (Mesorhizobium loti (strain MAFF 303099)).